The primary structure comprises 158 residues: Small ribosomal subunit protein uS9 (158 aa).

It belongs to the universal ribosomal protein uS9 family.

In Brucella canis (strain ATCC 23365 / NCTC 10854 / RM-666), this protein is Small ribosomal subunit protein uS9.